We begin with the raw amino-acid sequence, 1117 residues long: MKKASRSVGSVPKVSGISKTQTVEKTKPENSSSASTGGKVIKTGTTASLSKTKSSDDLLAGMAGGVTVTNGVKGKKSTCPSTGSSASAPAMTTVENKSKISTGTSSSTKRSTSIGNKESSSTRERLRERTRLNQSKKLPSAGQGANDVALAKRSRSRTTTECDVRMSKSKSDNQISDKAALEAKVKDLLTLAKTKDVEILHLRNELRDMRAQLGINEDHSEGDEKSEKEAIIAHQPTDVESTLLQLQEQNTAIREELNQLKNENRMLKDRLNALGFSLEQRLDNSEKLFGYQSLSPEITPGNQSDGGGTLTSSVEGSAPGSVEDLLSQDENTLMDHQHSNSMDNLDSECSEVYQPLTSSDDALDAPSSSESEGIPSIERSRKGSSGNASEVSVACLTERIHQMEENQHSTSEELQATLQELADLQQITQELNSENERLGEEKVILMESLCQQSDKLEHFSRQIEYFRSLLDEHHISYVIDEDVKSGRYMELEQRYMDLAENARFEREQLLGVQQHLSNTLKMAEQDNKEAQEMIGALKERNHHMERIIESEQKGKAALAATLEEYKATVASDQIEMNRLKAQLENEKQKVAELYSIHNSGDKSDIQDLLESVRLDKEKAETLASSLQEDLAHTRNDANRLQDTIAKVEDEYRAFQEEAKKQIEELNMTLEKLRSELEEKETERSDMKETIFELEDEVEQHRAVKLHDNLIISDLENTVKKLQDQKHDMEREIKTLHRRLREESAEWRQFQADLQTAVVIANDIKSEAQEEIGDLKRRLHEAQEKNEKLTKELEEIKSRKQEEERGRVYNYMNAVERDLAALRQGMGLSRRSSTSSEPTPTVKTLIKSFDSASQVPNPTAAAIPRTPLSPSPMKTPPAAAVSPMQRHSISGPISTSKPLTALSDKRPNYGEIPVQEHLLRTSSTSRPASLPRVPAMESAKTISVSRRSSEEMKRDISAPEGASPASLMAMGTTSPQLSLSSSPTASVTPTTRSRIREERKDPLSALAREYGGSKRNALLKWCQKKTEGYQNIDITNFSSSWNDGLAFCALLHTYLPAHIPYQELNSQDKRRNFTLAFQAAESVGIKSTLDINEMVRTERPDWQSVMLYVTAIYKYFET.

Disordered regions lie at residues 1-176 (MKKA…NQIS), 293-323 (SLSP…GSVE), and 358-390 (SSDD…NASE). Composition is skewed to low complexity over residues 45 to 72 (TTAS…TNGV) and 99 to 119 (KIST…NKES). 2 stretches are compositionally biased toward basic and acidic residues: residues 120–131 (SSTRERLRERTR) and 158–171 (TTTE…KSKS). Residues 168-280 (KSKSDNQISD…LNALGFSLEQ (113 aa)) are a coiled coil. Polar residues predominate over residues 293-303 (SLSPEITPGNQ). A compositionally biased stretch (low complexity) spans 358-377 (SSDDALDAPSSSESEGIPSI). Ser384, Ser385, and Ser389 each carry phosphoserine. Coiled coils occupy residues 394 to 449 (ACLT…MESL) and 487 to 807 (RYME…RGRV). Positions 852–878 (SQVPNPTAAAIPRTPLSPSPMKTPPAA) are disordered. Ser868, Ser881, and Ser887 each carry phosphoserine. The disordered stretch occupies residues 920 to 997 (TSSTSRPASL…PTTRSRIREE (78 aa)). The segment covering 946–956 (RSSEEMKRDIS) has biased composition (basic and acidic residues). The segment covering 971–990 (TTSPQLSLSSSPTASVTPTT) has biased composition (low complexity). One can recognise a Calponin-homology (CH) domain in the interval 1011–1116 (GSKRNALLKW…YVTAIYKYFE (106 aa)).

It belongs to the cytospin-A family. In terms of assembly, may interact with both microtubules and actin cytoskeleton.

Its subcellular location is the cytoplasm. The protein resides in the cytoskeleton. It localises to the spindle. It is found in the cell junction. The protein localises to the gap junction. Functionally, involved in cytokinesis and spindle organization. May play a role in actin cytoskeleton organization and microtubule stabilization and hence required for proper cell adhesion and migration. This is Cytospin-A (SPECC1L) from Canis lupus familiaris (Dog).